A 488-amino-acid polypeptide reads, in one-letter code: Histone deacetylase 2 (488 aa).

A histone deacetylase region spans residues 9–322 (KKKVCYYYDG…WTYETAVALD (314 aa)). Residues glycine 28 and lysine 32 each contribute to the 1D-myo-inositol 1,4,5,6-tetrakisphosphate site. Histidine 142 is an active-site residue. Zn(2+) contacts are provided by aspartate 177, histidine 179, and aspartate 265. Position 271 (arginine 271) interacts with 1D-myo-inositol 1,4,5,6-tetrakisphosphate. The disordered stretch occupies residues 389–488 (AVHEDSGDED…GAKSEQLSNP (100 aa)). Positions 402–417 (PDKRISIRASDKRIAC) are enriched in basic and acidic residues. Over residues 418–428 (DEEFSDSEDEG) the composition is skewed to acidic residues. The segment covering 429–481 (EGGRRNVADHKKGAKKARIEEDKKETEDKKADVKEEDKSKDNSGEKTDTKGAK) has biased composition (basic and acidic residues).

The protein belongs to the histone deacetylase family. HD type 1 subfamily. The cofactor is Zn(2+).

It is found in the nucleus. The protein resides in the cytoplasm. It catalyses the reaction N(6)-acetyl-L-lysyl-[histone] + H2O = L-lysyl-[histone] + acetate. The catalysed reaction is N(6)-acetyl-L-lysyl-[protein] + H2O = L-lysyl-[protein] + acetate. It carries out the reaction N(6)-(2E)-butenoyl-L-lysyl-[protein] + H2O = (2E)-2-butenoate + L-lysyl-[protein]. The enzyme catalyses N(6)-(2-hydroxyisobutanoyl)-L-lysyl-[protein] + H2O = 2-hydroxy-2-methylpropanoate + L-lysyl-[protein]. It catalyses the reaction N(6)-[(S)-lactoyl]-L-lysyl-[protein] + H2O = (S)-lactate + L-lysyl-[protein]. Inositol tetraphosphate (1D-myo-inositol 1,4,5,6-tetrakisphosphate) may act as an intermolecular glue between HDAC2 and N-Cor repressor complex components. Functionally, histone deacetylase that catalyzes the deacetylation of lysine residues on the N-terminal part of the core histones (H2A, H2B, H3 and H4). Histone deacetylation gives a tag for epigenetic repression and plays an important role in transcriptional regulation, cell cycle progression and developmental events. Histone deacetylases act via the formation of large multiprotein complexes. Also deacetylates non-histone proteins. In addition to protein deacetylase activity, also acts as a protein-lysine deacylase by recognizing other acyl groups: catalyzes removal of (2E)-butenoyl (crotonyl), lactoyl (lactyl) and 2-hydroxyisobutanoyl (2-hydroxyisobutyryl) acyl groups from lysine residues, leading to protein decrotonylation, delactylation and de-2-hydroxyisobutyrylation, respectively. In Gallus gallus (Chicken), this protein is Histone deacetylase 2 (HDAC2).